We begin with the raw amino-acid sequence, 254 residues long: UPF0246 protein FTN_1542 (254 aa).

Belongs to the UPF0246 family.

This is UPF0246 protein FTN_1542 from Francisella tularensis subsp. novicida (strain U112).